A 347-amino-acid polypeptide reads, in one-letter code: 4-hydroxy-2-oxovalerate aldolase (347 aa).

The Pyruvate carboxyltransferase domain occupies 2–252 (ILISDATLRD…DTRTTFERVM (251 aa)). 10–11 (RD) contributes to the substrate binding site. Asp11 contributes to the Mn(2+) binding site. The Proton acceptor role is filled by His14. Substrate is bound by residues Ser164 and His191. 2 residues coordinate Mn(2+): His191 and His193.

It belongs to the 4-hydroxy-2-oxovalerate aldolase family.

It catalyses the reaction (S)-4-hydroxy-2-oxopentanoate = acetaldehyde + pyruvate. In Burkholderia pseudomallei (strain 1710b), this protein is 4-hydroxy-2-oxovalerate aldolase (mhpE).